The primary structure comprises 224 residues: Urease accessory protein UreF (224 aa).

Belongs to the UreF family. In terms of assembly, ureD, UreF and UreG form a complex that acts as a GTP-hydrolysis-dependent molecular chaperone, activating the urease apoprotein by helping to assemble the nickel containing metallocenter of UreC. The UreE protein probably delivers the nickel.

Its subcellular location is the cytoplasm. Functionally, required for maturation of urease via the functional incorporation of the urease nickel metallocenter. The polypeptide is Urease accessory protein UreF (Pseudomonas fluorescens (strain SBW25)).